The sequence spans 718 residues: Ribosomal RNA large subunit methyltransferase K/L (718 aa).

Residues 43 to 154 (TQYRILLWSR…QDELVVSLDL (112 aa)) form the THUMP domain.

The protein belongs to the methyltransferase superfamily. RlmKL family.

The protein resides in the cytoplasm. It carries out the reaction guanosine(2445) in 23S rRNA + S-adenosyl-L-methionine = N(2)-methylguanosine(2445) in 23S rRNA + S-adenosyl-L-homocysteine + H(+). The enzyme catalyses guanosine(2069) in 23S rRNA + S-adenosyl-L-methionine = N(2)-methylguanosine(2069) in 23S rRNA + S-adenosyl-L-homocysteine + H(+). Specifically methylates the guanine in position 2445 (m2G2445) and the guanine in position 2069 (m7G2069) of 23S rRNA. This Histophilus somni (strain 2336) (Haemophilus somnus) protein is Ribosomal RNA large subunit methyltransferase K/L.